The following is a 256-amino-acid chain: Thiazole synthase (256 aa).

The active-site Schiff-base intermediate with DXP is the Lys98. Residues Gly159, 185 to 186 (AG), and 207 to 208 (NT) contribute to the 1-deoxy-D-xylulose 5-phosphate site.

It belongs to the ThiG family. In terms of assembly, homotetramer. Forms heterodimers with either ThiH or ThiS.

The protein resides in the cytoplasm. It catalyses the reaction [ThiS sulfur-carrier protein]-C-terminal-Gly-aminoethanethioate + 2-iminoacetate + 1-deoxy-D-xylulose 5-phosphate = [ThiS sulfur-carrier protein]-C-terminal Gly-Gly + 2-[(2R,5Z)-2-carboxy-4-methylthiazol-5(2H)-ylidene]ethyl phosphate + 2 H2O + H(+). It participates in cofactor biosynthesis; thiamine diphosphate biosynthesis. Catalyzes the rearrangement of 1-deoxy-D-xylulose 5-phosphate (DXP) to produce the thiazole phosphate moiety of thiamine. Sulfur is provided by the thiocarboxylate moiety of the carrier protein ThiS. In vitro, sulfur can be provided by H(2)S. The protein is Thiazole synthase of Syntrophobacter fumaroxidans (strain DSM 10017 / MPOB).